Here is a 498-residue protein sequence, read N- to C-terminus: Protein disulfide-isomerase (498 aa).

A signal peptide spans 1–23 (MASFRGSIWYCIFVLSLIAVAIS). 2 consecutive Thioredoxin domains span residues 24-143 (AAES…KQSG) and 339-484 (YLKA…KNRD). A glycan (N-linked (GlcNAc...) asparagine) is linked at N41. Residues C61, C64, C406, and C409 each act as nucleophile in the active site. Disulfide bonds link C61–C64 and C406–C409. The Prevents secretion from ER signature appears at 495–498 (KDEL).

It belongs to the protein disulfide isomerase family.

It localises to the endoplasmic reticulum lumen. It carries out the reaction Catalyzes the rearrangement of -S-S- bonds in proteins.. Functionally, participates in the folding of proteins containing disulfide bonds, may be involved in glycosylation, prolyl hydroxylation and triglyceride transfer. This chain is Protein disulfide-isomerase, found in Ricinus communis (Castor bean).